A 364-amino-acid chain; its full sequence is tRNA-specific 2-thiouridylase MnmA (364 aa).

ATP-binding positions include 13–20 (GMSGGVDS) and Met-39. Residues 99-101 (NPD) are interaction with target base in tRNA. Cys-104 acts as the Nucleophile in catalysis. A disulfide bond links Cys-104 and Cys-200. Gly-128 is a binding site for ATP. An interaction with tRNA region spans residues 150-152 (KDQ). Residue Cys-200 is the Cysteine persulfide intermediate of the active site. Positions 310 to 311 (RY) are interaction with tRNA.

It belongs to the MnmA/TRMU family.

It localises to the cytoplasm. It catalyses the reaction S-sulfanyl-L-cysteinyl-[protein] + uridine(34) in tRNA + AH2 + ATP = 2-thiouridine(34) in tRNA + L-cysteinyl-[protein] + A + AMP + diphosphate + H(+). In terms of biological role, catalyzes the 2-thiolation of uridine at the wobble position (U34) of tRNA, leading to the formation of s(2)U34. The sequence is that of tRNA-specific 2-thiouridylase MnmA from Alkaliphilus oremlandii (strain OhILAs) (Clostridium oremlandii (strain OhILAs)).